A 774-amino-acid polypeptide reads, in one-letter code: Vezatin (774 aa).

2 consecutive transmembrane segments (helical) span residues 138–158 (IATP…AVAA) and 163–183 (SISS…FTVL). Residues 430-457 (VRSLQLHLKALLNEVIVLEDELDKLSSC) adopt a coiled-coil conformation. Positions 746-757 (FGDEWDDDDDNE) are enriched in acidic residues. The tract at residues 746-774 (FGDEWDDDDDNEDHDHDKERNNDSSQLEG) is disordered. The segment covering 758–767 (DHDHDKERNN) has biased composition (basic and acidic residues).

This sequence belongs to the vezatin family. In terms of assembly, interacts with myosin VIIa and the cadherin-catenins complex.

It is found in the cell membrane. Its subcellular location is the cell junction. The protein resides in the adherens junction. The protein localises to the nucleus. Plays a pivotal role in the establishment of adherens junctions and their maintenance in adult life. The protein is Vezatin (vezt) of Xenopus laevis (African clawed frog).